We begin with the raw amino-acid sequence, 87 residues long: Small ribosomal subunit protein bS16 (87 aa).

This sequence belongs to the bacterial ribosomal protein bS16 family.

In Ehrlichia chaffeensis (strain ATCC CRL-10679 / Arkansas), this protein is Small ribosomal subunit protein bS16.